The primary structure comprises 615 residues: Alpha-terpinene synthase TPS33PK, chloroplastic (615 aa).

A chloroplast-targeting transit peptide spans 1–33 (MFCRLGVHQFSPLSLILNTTKLARASTLSSACY). The (2E)-geranyl diphosphate site is built by glutamate 334, valine 371, leucine 375, leucine 513, and serine 516. Mg(2+)-binding residues include valine 371 and leucine 375. Positions 371–375 (VYGTL) match the DDXXD motif motif. Mg(2+)-binding residues include serine 516, methionine 520, and aspartate 524.

This sequence belongs to the terpene synthase family. Tpsb subfamily. Requires Mg(2+) as cofactor. Mn(2+) is required as a cofactor.

It is found in the plastid. It localises to the chloroplast. The catalysed reaction is (2E)-geranyl diphosphate = alpha-terpinene + diphosphate. It carries out the reaction (2E)-geranyl diphosphate = gamma-terpinene + diphosphate. The protein operates within secondary metabolite biosynthesis; terpenoid biosynthesis. Involved in monoterpene (C10) olefins biosynthesis, constituants of cannabinoids and terpenoids-rich resins. Catalyzes mainly the conversion of (2E)-geranyl diphosphate to alpha-terpinene and gamma-terpinene. In Cannabis sativa (Hemp), this protein is Alpha-terpinene synthase TPS33PK, chloroplastic.